We begin with the raw amino-acid sequence, 152 residues long: Small ribosomal subunit protein uS13 (152 aa).

It belongs to the universal ribosomal protein uS13 family. As to quaternary structure, component of the small ribosomal subunit.

It localises to the cytoplasm. Component of the small ribosomal subunit. The ribosome is a large ribonucleoprotein complex responsible for the synthesis of proteins in the cell. The polypeptide is Small ribosomal subunit protein uS13 (rps18) (Ictalurus punctatus (Channel catfish)).